Consider the following 918-residue polypeptide: DNA repair and recombination protein RAD54B (918 aa).

Residues 1-11 (MRRSAAPSQVL) show a composition bias toward polar residues. The interval 1–29 (MRRSAAPSQVLGNVAKKPRFIPPGKSNAL) is disordered. In terms of domain architecture, Helicase ATP-binding spans 320–487 (GMRVSGRFGA…YALIEFVNPG (168 aa)). Position 333-340 (333-340 (DEMGLGKT)) interacts with ATP. The DEGH box signature appears at 438–441 (DEGH). The Helicase C-terminal domain occupies 653-817 (VLVKLLAAIR…HIHFSVEELR (165 aa)). The tract at residues 842-873 (KDHQNPSSKKPSVSRCCQLRQDQGKHNSKKPL) is disordered.

It belongs to the SNF2/RAD54 helicase family.

The protein localises to the nucleus. In terms of biological role, involved in DNA repair and mitotic recombination. This Gallus gallus (Chicken) protein is DNA repair and recombination protein RAD54B (RAD54B).